The following is a 753-amino-acid chain: Probable tubulin--tyrosine ligase PBY1 (753 aa).

The TTL domain maps to 343 to 734 (MEYIYKPLTH…PIFNENRNKT (392 aa)).

Belongs to the tubulin--tyrosine ligase family. It depends on Mg(2+) as a cofactor. K(+) serves as cofactor.

Its subcellular location is the cytoplasm. The protein localises to the P-body. The catalysed reaction is C-terminal L-alpha-aminoacyl-L-glutamyl-L-glutamyl-[tubulin] + L-tyrosine + ATP = C-terminal L-alpha-aminoacyl-L-glutamyl-L-glutamyl-L-tyrosyl-[tubulin] + ADP + phosphate + H(+). Its function is as follows. Probable P-body-associated tubulin--tyrosine ligase. The sequence is that of Probable tubulin--tyrosine ligase PBY1 (PBY1) from Saccharomyces cerevisiae (strain ATCC 204508 / S288c) (Baker's yeast).